We begin with the raw amino-acid sequence, 286 residues long: Bifunctional protein FolD (286 aa).

Residues 165–167 (GRS) and Ser190 each bind NADP(+).

The protein belongs to the tetrahydrofolate dehydrogenase/cyclohydrolase family. Homodimer.

It catalyses the reaction (6R)-5,10-methylene-5,6,7,8-tetrahydrofolate + NADP(+) = (6R)-5,10-methenyltetrahydrofolate + NADPH. The enzyme catalyses (6R)-5,10-methenyltetrahydrofolate + H2O = (6R)-10-formyltetrahydrofolate + H(+). It functions in the pathway one-carbon metabolism; tetrahydrofolate interconversion. Catalyzes the oxidation of 5,10-methylenetetrahydrofolate to 5,10-methenyltetrahydrofolate and then the hydrolysis of 5,10-methenyltetrahydrofolate to 10-formyltetrahydrofolate. This chain is Bifunctional protein FolD, found in Paraburkholderia phytofirmans (strain DSM 17436 / LMG 22146 / PsJN) (Burkholderia phytofirmans).